Here is a 166-residue protein sequence, read N- to C-terminus: Protein SprT (166 aa).

The region spanning 19 to 164 (RDALARANLK…CVRCGDTLVA (146 aa)) is the SprT-like domain. Position 78 (His-78) interacts with Zn(2+). Glu-79 is a catalytic residue. Residue His-82 participates in Zn(2+) binding.

Belongs to the SprT family. It depends on Zn(2+) as a cofactor.

It localises to the cytoplasm. In Cronobacter sakazakii (strain ATCC BAA-894) (Enterobacter sakazakii), this protein is Protein SprT.